The sequence spans 144 residues: Ribonuclease H (144 aa).

The RNase H type-1 domain maps to 1–141 (MKKVEIFTDG…ADRLASEAAD (141 aa)). Asp9, Glu47, Asp69, and Asp133 together coordinate Mg(2+).

The protein belongs to the RNase H family. Monomer. Requires Mg(2+) as cofactor.

The protein resides in the cytoplasm. It catalyses the reaction Endonucleolytic cleavage to 5'-phosphomonoester.. Endonuclease that specifically degrades the RNA of RNA-DNA hybrids. The sequence is that of Ribonuclease H from Erythrobacter litoralis (strain HTCC2594).